The primary structure comprises 1165 residues: Transient receptor potential cation channel subfamily M member 5 (1165 aa).

At 1–715 (MVEKSSERFD…LRRWNRFWSA (715 aa)) the chain is on the cytoplasmic side. Position 121 is a phosphoserine (Ser121). Residues Glu212, Cys324, Asp333, Asp336, and Glu337 each contribute to the Ca(2+) site. Residues 716-740 (PVTVFMGNVIMYFAFLILFSYVLLL) form a helical membrane-spanning segment. At 741-751 (DFRPPPPYGPS) the chain is on the extracellular side. A helical membrane pass occupies residues 752-771 (AAEIILYFWVFTLVLEEIRQ). Glu768 and Gln771 together coordinate Ca(2+). The Cytoplasmic portion of the chain corresponds to 772–792 (SFFTDEDMSILKKMKLYVEDN). A helical membrane pass occupies residues 793–811 (WNKCDMVAISLFVVGLSCR). 2 residues coordinate Ca(2+): Asn794 and Asp797. Over 812 to 818 (MAMSTYE) the chain is Extracellular. The helical transmembrane segment at 819 to 841 (AGRTVLALDFMVFTLRLIHIFAI) threads the bilayer. Topologically, residues 842-850 (HKQLGPKII) are cytoplasmic. Residues 851-880 (IVERMIKDVFFFLFFLSVWLIAYGVTTQAL) form a helical membrane-spanning segment. The Extracellular portion of the chain corresponds to 881 to 889 (LHPNDPRID). The segment at residues 890–930 (WVFRRALYRPYLHIFGQIPLEEIDAAKMPDDNCTTDVQEII) is an intramembrane region (pore-forming). Positions 904–906 (FGQ) match the Selectivity filter motif. Over 931 to 942 (LGTLPPCPNIYA) the chain is Extracellular. Residues 943 to 977 (NWLVILLLVIYLLVTNVLLLNLLIAMFSYTFQVVQ) form a helical membrane-spanning segment. The Cytoplasmic segment spans residues 978–1165 (ENADIFWKFQ…TDKKLPFIDH (188 aa)). Glu994 is a Ca(2+) binding site. Positions 1122 to 1165 (RDAPKAPRSIAGSSRDQQPQGAKRQQPAGHPAYGTDKKLPFIDH) are disordered. Residues 1132–1141 (AGSSRDQQPQ) show a composition bias toward polar residues. Basic and acidic residues predominate over residues 1156–1165 (TDKKLPFIDH).

It belongs to the transient receptor (TC 1.A.4) family. LTrpC subfamily. TRPM5 sub-subfamily. In terms of assembly, homotetramer.

The protein localises to the cell membrane. It catalyses the reaction Na(+)(in) = Na(+)(out). The catalysed reaction is K(+)(in) = K(+)(out). Ca(2+)-activated cation channel. Displays voltage dependence modulation. Regulated by PI(4,5)P2 levels. PI(4,5)P 2 reverses the Ca(2+) -induced desensitization of channels. Is highly temperature-sensitive. Monovalent cation-selective ion channel activated by intracellular Ca(2+) in a voltage- and temperature-dependent manner. Mediates the transport of Na(+), K(+) and Cs(+) ions equally well. Activated directly by increase in intracellular Ca(2+), but is impermeable to it. The activation mechanism of TRPM5 involves a multistep process. TRPM5 activation involves ligand binding (i.e., tastant molecule, glucose stimulation) to Gq/G-protein coupled receptors (GPCR) and leads to the breakdown of phosphatidylinositol bisphosphate (PIP2) into diacylglycerol (DAG) and inositol trisphosphate (IP3), IP3 binds to its receptors in the endoplasmic reticulum and cause Ca(2+) release. Simultaneously with the intracellular Ca(2+) release, DAG activates the protein kinase C (PKC), which phosphorylates the TRPM5 channel. This phosphorylation combined with the bound Ca(2+), leads to a robust inward current allowing the entry of sodium ions (Na+) into the cell. This ion influx depolarizes the cell membrane, generating action potentials that propagate TRPM5 signals. The sequence is that of Transient receptor potential cation channel subfamily M member 5 from Danio rerio (Zebrafish).